The following is a 1507-amino-acid chain: DNA-directed RNA polymerase subunit beta' (1507 aa).

Residues Cys-71, Cys-73, Cys-86, and Cys-89 each contribute to the Zn(2+) site. Positions 470, 472, and 474 each coordinate Mg(2+). Residues Cys-800, Cys-874, Cys-881, and Cys-884 each coordinate Zn(2+).

It belongs to the RNA polymerase beta' chain family. The RNAP catalytic core consists of 2 alpha, 1 beta, 1 beta' and 1 omega subunit. When a sigma factor is associated with the core the holoenzyme is formed, which can initiate transcription. It depends on Mg(2+) as a cofactor. Zn(2+) serves as cofactor.

The enzyme catalyses RNA(n) + a ribonucleoside 5'-triphosphate = RNA(n+1) + diphosphate. Functionally, DNA-dependent RNA polymerase catalyzes the transcription of DNA into RNA using the four ribonucleoside triphosphates as substrates. This Nitratiruptor sp. (strain SB155-2) protein is DNA-directed RNA polymerase subunit beta'.